The following is a 480-amino-acid chain: Vacuolar protein sorting-associated protein 9A (480 aa).

Positions 111-255 constitute a VPS9 domain; the sequence is VKSDEELFEK…IWNIDGESLS (145 aa). 2 residues coordinate GTP: Asn189 and Asp194. Over residues 276–288 the composition is skewed to polar residues; it reads SASSENQDNQNNL. Disordered stretches follow at residues 276–338 and 418–480; these read SASS…VQSI and ESEE…PEHA. Residues 289-305 are compositionally biased toward basic and acidic residues; sequence DVREQKSQTLKASRDSD. Polar residues-rich tracts occupy residues 327–338, 427–437, and 451–461; these read ASSNPVERVQSI, NAVNFSEGSSK, and VDNTGTQQTAV.

As to quaternary structure, interacts with RAB5A. Interacts with GPA3 (via C-terminus).

The protein localises to the cytoplasm. It localises to the golgi apparatus. The protein resides in the trans-Golgi network. It is found in the prevacuolar compartment. In terms of biological role, functions as a guanine nucleotide exchange factor (GEF) for Rab small GTPases. Activates specifically RAB5A protein. Functions cooperatively with RAB5A to regulate post-Golgi dense vesicle-mediated transport of storage proteins to the type II protein bodies (PBII) protein storage vacuoles in developing endosperm. This chain is Vacuolar protein sorting-associated protein 9A, found in Oryza sativa subsp. japonica (Rice).